Reading from the N-terminus, the 459-residue chain is Argininosuccinate lyase (459 aa).

It belongs to the lyase 1 family. Argininosuccinate lyase subfamily.

Its subcellular location is the cytoplasm. The enzyme catalyses 2-(N(omega)-L-arginino)succinate = fumarate + L-arginine. The protein operates within amino-acid biosynthesis; L-arginine biosynthesis; L-arginine from L-ornithine and carbamoyl phosphate: step 3/3. This chain is Argininosuccinate lyase, found in Lactococcus lactis subsp. cremoris (strain SK11).